We begin with the raw amino-acid sequence, 33 residues long: Potassium channel toxin alpha-KTx 10.4 (33 aa).

Intrachain disulfides connect Cys3–Cys22, Cys8–Cys27, and Cys12–Cys29.

This sequence belongs to the short scorpion toxin superfamily. Potassium channel inhibitor family. Alpha-KTx 10 subfamily. Expressed by the venom gland.

Its subcellular location is the secreted. Functionally, blocks human voltage-gated potassium channel Kv1.2/KCNA2 (IC(50)=3.6 nM) and Kv1.3/KCNA3 (IC(50)=72 nM). This is Potassium channel toxin alpha-KTx 10.4 from Centruroides tecomanus (Scorpion).